The chain runs to 236 residues: 2,3,4,5-tetrahydropyridine-2,6-dicarboxylate N-acetyltransferase (236 aa).

It belongs to the transferase hexapeptide repeat family. DapH subfamily.

The catalysed reaction is (S)-2,3,4,5-tetrahydrodipicolinate + acetyl-CoA + H2O = L-2-acetamido-6-oxoheptanedioate + CoA. The protein operates within amino-acid biosynthesis; L-lysine biosynthesis via DAP pathway; LL-2,6-diaminopimelate from (S)-tetrahydrodipicolinate (acetylase route): step 1/3. Functionally, catalyzes the transfer of an acetyl group from acetyl-CoA to tetrahydrodipicolinate. The protein is 2,3,4,5-tetrahydropyridine-2,6-dicarboxylate N-acetyltransferase of Bacillus subtilis (strain 168).